The sequence spans 372 residues: Cyclin-A3-2 (372 aa).

The interval 53–73 is disordered; sequence NQKKETQKPKRNLKPPPAKQI.

The protein belongs to the cyclin family. Cyclin AB subfamily.

This Arabidopsis thaliana (Mouse-ear cress) protein is Cyclin-A3-2 (CYCA3-2).